The primary structure comprises 225 residues: Germin-like protein 8-7 (225 aa).

The N-terminal stretch at 1-23 is a signal peptide; that stretch reads MASPSSFCLLAVLLALVSWQAIA. A disulfide bridge connects residues Cys33 and Cys48. One can recognise a Cupin type-1 domain in the interval 63–213; the sequence is AMLDTPRKTN…AFQVEKGTID (151 aa). The N-linked (GlcNAc...) asparagine glycan is linked to Asn77. Mn(2+) contacts are provided by His110, His112, and Glu117. N-linked (GlcNAc...) asparagine glycosylation is present at Asn136. His158 is a binding site for Mn(2+).

Belongs to the germin family. As to quaternary structure, oligomer (believed to be a pentamer but probably hexamer).

It is found in the secreted. The protein localises to the extracellular space. The protein resides in the apoplast. Plays a role in broad-spectrum disease resistance. Probably has no oxalate oxidase activity even if the active site is conserved. In Oryza sativa subsp. japonica (Rice), this protein is Germin-like protein 8-7 (GER6).